The chain runs to 159 residues: MNITIISVGKLKEKYLKLGIDEYIKRLTRYAKLNIIEIPDEKAPENLSSAEEQIVKNKEGEGILKNIKDGMYVIALDLKGKMLSSEELADKLQSLGVAGNSNIAFIIGGSLGLSEDVLKRADYKLCFSPMTFPHQLMKLILLEQIYRGLRIIKGEPYHK.

S-adenosyl-L-methionine-binding positions include L76, G108, and 127–132; that span reads FSPMTF.

It belongs to the RNA methyltransferase RlmH family. In terms of assembly, homodimer.

The protein localises to the cytoplasm. The catalysed reaction is pseudouridine(1915) in 23S rRNA + S-adenosyl-L-methionine = N(3)-methylpseudouridine(1915) in 23S rRNA + S-adenosyl-L-homocysteine + H(+). Its function is as follows. Specifically methylates the pseudouridine at position 1915 (m3Psi1915) in 23S rRNA. The polypeptide is Ribosomal RNA large subunit methyltransferase H (Alkaliphilus oremlandii (strain OhILAs) (Clostridium oremlandii (strain OhILAs))).